Here is a 225-residue protein sequence, read N- to C-terminus: Ribosomal RNA small subunit methyltransferase G (225 aa).

Residues Gly69, 119 to 120 (AE), and Arg136 contribute to the S-adenosyl-L-methionine site.

The protein belongs to the methyltransferase superfamily. RNA methyltransferase RsmG family.

It is found in the cytoplasm. Specifically methylates the N7 position of a guanine in 16S rRNA. This chain is Ribosomal RNA small subunit methyltransferase G, found in Pseudothermotoga lettingae (strain ATCC BAA-301 / DSM 14385 / NBRC 107922 / TMO) (Thermotoga lettingae).